The primary structure comprises 349 residues: Anthranilate phosphoribosyltransferase (349 aa).

Residues G86, 89–90, T94, 96–99, 114–122, and S126 contribute to the 5-phospho-alpha-D-ribose 1-diphosphate site; these read GD, NIST, and KHGNKSASG. G86 contacts anthranilate. S98 contacts Mg(2+). N117 contacts anthranilate. R172 is a binding site for anthranilate. 2 residues coordinate Mg(2+): D231 and E232.

The protein belongs to the anthranilate phosphoribosyltransferase family. Homodimer. Requires Mg(2+) as cofactor.

It catalyses the reaction N-(5-phospho-beta-D-ribosyl)anthranilate + diphosphate = 5-phospho-alpha-D-ribose 1-diphosphate + anthranilate. It participates in amino-acid biosynthesis; L-tryptophan biosynthesis; L-tryptophan from chorismate: step 2/5. Functionally, catalyzes the transfer of the phosphoribosyl group of 5-phosphorylribose-1-pyrophosphate (PRPP) to anthranilate to yield N-(5'-phosphoribosyl)-anthranilate (PRA). The chain is Anthranilate phosphoribosyltransferase from Prochlorococcus marinus (strain MIT 9312).